Consider the following 618-residue polypeptide: Membrane protein insertase YidC (618 aa).

6 helical membrane-spanning segments follow: residues 3 to 23 (KNTI…SFLS), 363 to 383 (WGLS…IVVF), 439 to 459 (LPML…PSAI), 478 to 498 (FITF…FCLL), 520 to 540 (PQMA…LFVL), and 545 to 565 (SGLN…MIIL).

The protein belongs to the OXA1/ALB3/YidC family. Type 1 subfamily. In terms of assembly, interacts with the Sec translocase complex via SecD. Specifically interacts with transmembrane segments of nascent integral membrane proteins during membrane integration.

The protein resides in the cell inner membrane. Functionally, required for the insertion and/or proper folding and/or complex formation of integral membrane proteins into the membrane. Involved in integration of membrane proteins that insert both dependently and independently of the Sec translocase complex, as well as at least some lipoproteins. Aids folding of multispanning membrane proteins. This is Membrane protein insertase YidC from Bacteroides fragilis (strain ATCC 25285 / DSM 2151 / CCUG 4856 / JCM 11019 / LMG 10263 / NCTC 9343 / Onslow / VPI 2553 / EN-2).